We begin with the raw amino-acid sequence, 177 residues long: Large ribosomal subunit protein uL6 (177 aa).

The protein belongs to the universal ribosomal protein uL6 family. Part of the 50S ribosomal subunit.

This protein binds to the 23S rRNA, and is important in its secondary structure. It is located near the subunit interface in the base of the L7/L12 stalk, and near the tRNA binding site of the peptidyltransferase center. This Azoarcus sp. (strain BH72) protein is Large ribosomal subunit protein uL6.